We begin with the raw amino-acid sequence, 388 residues long: Na(+)/H(+) antiporter NhaA (388 aa).

At 1–11 the chain is on the cytoplasmic side; that stretch reads MKHLHRFFSSD. Residues 12-31 form a helical membrane-spanning segment; sequence ASGGIILIIAAILAMMMANS. At 32–58 the chain is on the periplasmic side; the sequence is GATSGWYHDFLETPVQLRVGSLEINKN. The chain crosses the membrane as a helical span at residues 59–80; that stretch reads MLLWINDALMAVFFLLVGLEVK. Topologically, residues 81-96 are cytoplasmic; sequence RELMQGSLASLRQAAF. The chain crosses the membrane as a helical span at residues 97–116; that stretch reads PVIAAIGGMIVPALLYLAFN. Residues 117–122 are Periplasmic-facing; sequence YADPIT. Residues 123–130 traverse the membrane as a helical segment; that stretch reads REGWAIPA. Residues 131–154 lie on the Cytoplasmic side of the membrane; it reads ATDIAFALGVLALLGSRVPLALKI. A helical transmembrane segment spans residues 155–176; the sequence is FLMALAIIDDLGAIIIIALFYT. Residues 177–180 lie on the Periplasmic side of the membrane; the sequence is NDLS. The chain crosses the membrane as a helical span at residues 181 to 200; sequence MASLGVAAVAIAVLAVLNLC. The Cytoplasmic portion of the chain corresponds to 201–204; it reads GVRR. The chain crosses the membrane as a helical span at residues 205–222; that stretch reads TGVYILVGVVLWTAVLKS. Position 223 (G223) is a topological domain, periplasmic. The chain crosses the membrane as a helical span at residues 224-236; the sequence is VHATLAGVIVGFF. Residues 237-253 lie on the Cytoplasmic side of the membrane; sequence IPLKEKHGRSTAKRLEH. The helical transmembrane segment at 254–272 threads the bilayer; it reads VLHPWVAYLILPLFAFANA. Residues 273 to 286 are Periplasmic-facing; the sequence is GVSLQGVTLDGLTS. A helical membrane pass occupies residues 287-310; that stretch reads ILPLGIIAGLLIGKPLGISLFCWL. Residues 311-339 are Cytoplasmic-facing; the sequence is ALRLKLAHLPEGTTYQQIMAVGILCGIGF. The chain crosses the membrane as a helical span at residues 340–350; the sequence is TMSIFIASLAF. Topologically, residues 351 to 357 are periplasmic; the sequence is GSVDPEL. Residues 358 to 380 traverse the membrane as a helical segment; it reads INWAKLGILVGSISSAVIGYSWL. At 381-388 the chain is on the cytoplasmic side; sequence RVRLRPSV.

The protein belongs to the NhaA Na(+)/H(+) (TC 2.A.33) antiporter family.

Its subcellular location is the cell inner membrane. It carries out the reaction Na(+)(in) + 2 H(+)(out) = Na(+)(out) + 2 H(+)(in). Functionally, na(+)/H(+) antiporter that extrudes sodium in exchange for external protons. The protein is Na(+)/H(+) antiporter NhaA of Shigella dysenteriae serotype 1 (strain Sd197).